The sequence spans 524 residues: GMP synthase [glutamine-hydrolyzing] (524 aa).

The Glutamine amidotransferase type-1 domain occupies 5–195 (KVIVIDFGGQ…VRGVCGCAGT (191 aa)). Cys-82 acts as the Nucleophile in catalysis. Residues His-169 and Glu-171 contribute to the active site. The GMPS ATP-PPase domain maps to 196-389 (WKMDAFVENT…LGIPEHLVFR (194 aa)). 223–229 (SGGVDSS) is a binding site for ATP.

As to quaternary structure, homodimer.

It carries out the reaction XMP + L-glutamine + ATP + H2O = GMP + L-glutamate + AMP + diphosphate + 2 H(+). Its pathway is purine metabolism; GMP biosynthesis; GMP from XMP (L-Gln route): step 1/1. Catalyzes the synthesis of GMP from XMP. This chain is GMP synthase [glutamine-hydrolyzing], found in Lachnospira eligens (strain ATCC 27750 / DSM 3376 / VPI C15-48 / C15-B4) (Eubacterium eligens).